The chain runs to 353 residues: Protein AC18 (353 aa).

The protein localises to the host nucleus. The protein resides in the host cytoplasm. Functionally, may play a role in occlusion-derived virions (ODV) formation and/or regulation of late viral gene expression. In Autographa californica nuclear polyhedrosis virus (AcMNPV), this protein is Protein AC18 (DA41).